The primary structure comprises 471 residues: Tripartite motif-containing protein 60 (471 aa).

The RING-type zinc finger occupies 16–57 (CPICLEYLKDPVTINCGHNFCRSCLSVSWKDLDDTFPCPVCR). The B box-type zinc finger occupies 92-133 (KENAMCEKHNQFLTLFCVKDLEILCTQCSFSTKHQKHYICPI). Cys97, His100, Cys119, and His125 together coordinate Zn(2+). The stretch at 171 to 223 (ELKKKVEYKREEINSEFEQIRLFLQNEQEMILRQIQDEEMNILAKLNENLVEL) forms a coiled coil. One can recognise a B30.2/SPRY domain in the interval 277-470 (FSLPPQYSGL…LKICSVSDSE (194 aa)).

This sequence belongs to the TRIM/RBCC family.

Its function is as follows. E3 SUMO-protein ligase that mediates SUMOylation of TAB2 leading to inhibition of NF-kappa-B and MAPK pathways by suppressing the TRAF6/TAB2/TAK1 complex. The polypeptide is Tripartite motif-containing protein 60 (TRIM60) (Homo sapiens (Human)).